Reading from the N-terminus, the 190-residue chain is Peptidyl-tRNA hydrolase (190 aa).

Tyrosine 14 contacts tRNA. Histidine 19 serves as the catalytic Proton acceptor. Residues tyrosine 64, asparagine 66, and asparagine 112 each contribute to the tRNA site.

This sequence belongs to the PTH family. As to quaternary structure, monomer.

The protein resides in the cytoplasm. It carries out the reaction an N-acyl-L-alpha-aminoacyl-tRNA + H2O = an N-acyl-L-amino acid + a tRNA + H(+). In terms of biological role, hydrolyzes ribosome-free peptidyl-tRNAs (with 1 or more amino acids incorporated), which drop off the ribosome during protein synthesis, or as a result of ribosome stalling. Functionally, catalyzes the release of premature peptidyl moieties from peptidyl-tRNA molecules trapped in stalled 50S ribosomal subunits, and thus maintains levels of free tRNAs and 50S ribosomes. In Chlorobium phaeovibrioides (strain DSM 265 / 1930) (Prosthecochloris vibrioformis (strain DSM 265)), this protein is Peptidyl-tRNA hydrolase.